Consider the following 469-residue polypeptide: Arginine biosynthesis bifunctional protein ArgJ, mitochondrial (469 aa).

Thr-199, Lys-228, Thr-239, Glu-325, Asn-464, and Thr-469 together coordinate substrate. Thr-239 acts as the Nucleophile in catalysis.

This sequence belongs to the ArgJ family. As to quaternary structure, heterodimer of an alpha and a beta chain. Post-translationally, the alpha and beta chains are autoproteolytically processed from a single precursor protein within the mitochondrion.

It is found in the mitochondrion matrix. It carries out the reaction N(2)-acetyl-L-ornithine + L-glutamate = N-acetyl-L-glutamate + L-ornithine. The catalysed reaction is L-glutamate + acetyl-CoA = N-acetyl-L-glutamate + CoA + H(+). It functions in the pathway amino-acid biosynthesis; L-arginine biosynthesis; L-ornithine and N-acetyl-L-glutamate from L-glutamate and N(2)-acetyl-L-ornithine (cyclic): step 1/1. It participates in amino-acid biosynthesis; L-arginine biosynthesis; N(2)-acetyl-L-ornithine from L-glutamate: step 1/4. Its function is as follows. Catalyzes two activities which are involved in the cyclic version of arginine biosynthesis: the synthesis of acetylglutamate from glutamate and acetyl-CoA, and of ornithine by transacetylation between acetylornithine and glutamate. The sequence is that of Arginine biosynthesis bifunctional protein ArgJ, mitochondrial from Neurospora crassa (strain ATCC 24698 / 74-OR23-1A / CBS 708.71 / DSM 1257 / FGSC 987).